A 421-amino-acid polypeptide reads, in one-letter code: MTESVLDYMTRLGRAARQASRVIARATTAQKNRALLAAADALDAARPELTAANEQDLANGRANGLEPALLDRLALTPARIDEMIEGLRQVAKLPDPIGEIRDMRYLPSGIQVGKMRVPLGVIGIIYESRPNVTIDAASLCLKSGNATILRGGSEAIHSNRAIATCIQQGLAAADLPPHVVQVVETTDRAAVGALITMPEFVDVIVPRGGKSLIERVSRDAKVPVIKHLDGVCHVYIDVAADLDKAIRIADNAKTQRYAPCNTMETLLVHSAIAERVLPPLAAIYRDKGVELRGCAQTRALLGAGVLEATEEDWRTEYTAPILSIRVLDNLEQAIEHINTYGSHHTDSIVTENFSDARRFLNEVDSSSVMVNASTRFADGFEYGLGAEIGISTDKLHARGPVGLEGLTSEKYVVFGDGHVRT.

This sequence belongs to the gamma-glutamyl phosphate reductase family.

It is found in the cytoplasm. It catalyses the reaction L-glutamate 5-semialdehyde + phosphate + NADP(+) = L-glutamyl 5-phosphate + NADPH + H(+). Its pathway is amino-acid biosynthesis; L-proline biosynthesis; L-glutamate 5-semialdehyde from L-glutamate: step 2/2. Functionally, catalyzes the NADPH-dependent reduction of L-glutamate 5-phosphate into L-glutamate 5-semialdehyde and phosphate. The product spontaneously undergoes cyclization to form 1-pyrroline-5-carboxylate. In Pseudomonas fluorescens (strain ATCC BAA-477 / NRRL B-23932 / Pf-5), this protein is Gamma-glutamyl phosphate reductase.